Consider the following 169-residue polypeptide: Transmembrane protein 89 (169 aa).

An N-terminal signal peptide occupies residues 1 to 22; that stretch reads MLYTLLLVPSLFLLVMPVPSQG. Residues 23-75 lie on the Extracellular side of the membrane; the sequence is WSRPLWYQVGLDLQPWGCQPNSPDIWGCQPNSLDSCKNSLGCPGYWLGLGGNR. A helical transmembrane segment spans residues 76–96; it reads IYPVAGVTITTTMLLVVSRVI. Over 97–169 the chain is Cytoplasmic; that stretch reads VHRWRAKVAK…QIKGSPPQSG (73 aa).

The protein localises to the membrane. In Mus musculus (Mouse), this protein is Transmembrane protein 89 (Tmem89).